Reading from the N-terminus, the 488-residue chain is Probable glycine dehydrogenase (decarboxylating) subunit 2 (488 aa).

K274 carries the N6-(pyridoxal phosphate)lysine modification.

Belongs to the GcvP family. C-terminal subunit subfamily. The glycine cleavage system is composed of four proteins: P, T, L and H. In this organism, the P 'protein' is a heterodimer of two subunits. It depends on pyridoxal 5'-phosphate as a cofactor.

It catalyses the reaction N(6)-[(R)-lipoyl]-L-lysyl-[glycine-cleavage complex H protein] + glycine + H(+) = N(6)-[(R)-S(8)-aminomethyldihydrolipoyl]-L-lysyl-[glycine-cleavage complex H protein] + CO2. Its function is as follows. The glycine cleavage system catalyzes the degradation of glycine. The P protein binds the alpha-amino group of glycine through its pyridoxal phosphate cofactor; CO(2) is released and the remaining methylamine moiety is then transferred to the lipoamide cofactor of the H protein. The protein is Probable glycine dehydrogenase (decarboxylating) subunit 2 of Listeria monocytogenes serotype 4a (strain HCC23).